A 261-amino-acid polypeptide reads, in one-letter code: Carnitinyl-CoA dehydratase (261 aa).

The active-site Nucleophile is the glutamate 111. Glutamate 131 acts as the Proton acceptor in catalysis.

This sequence belongs to the enoyl-CoA hydratase/isomerase family.

The catalysed reaction is (R)-carnitinyl-CoA = crotonobetainyl-CoA + H2O. It functions in the pathway amine and polyamine metabolism; carnitine metabolism. Functionally, catalyzes the reversible dehydration of L-carnitinyl-CoA to crotonobetainyl-CoA. The chain is Carnitinyl-CoA dehydratase from Escherichia coli (strain ATCC 8739 / DSM 1576 / NBRC 3972 / NCIMB 8545 / WDCM 00012 / Crooks).